A 398-amino-acid polypeptide reads, in one-letter code: Acetate kinase (398 aa).

A Mg(2+)-binding site is contributed by Asn-7. Lys-14 lines the ATP pocket. Arg-91 provides a ligand contact to substrate. The active-site Proton donor/acceptor is the Asp-148. Residues 208 to 212 (HIGNG), 283 to 285 (DMR), and 331 to 335 (GVGEN) contribute to the ATP site. Glu-385 serves as a coordination point for Mg(2+).

Belongs to the acetokinase family. Homodimer. The cofactor is Mg(2+). Requires Mn(2+) as cofactor.

It is found in the cytoplasm. The catalysed reaction is acetate + ATP = acetyl phosphate + ADP. The protein operates within metabolic intermediate biosynthesis; acetyl-CoA biosynthesis; acetyl-CoA from acetate: step 1/2. Its function is as follows. Catalyzes the formation of acetyl phosphate from acetate and ATP. Can also catalyze the reverse reaction. This is Acetate kinase from Porphyromonas gingivalis (strain ATCC BAA-308 / W83).